We begin with the raw amino-acid sequence, 411 residues long: Elongation factor 1-gamma (411 aa).

Residues 3 to 84 (LTLWSGVNPE…HIARLDRSGG (82 aa)) enclose the GST N-terminal domain. A GST C-terminal domain is found at 90-216 (TPLEGSQVDM…QGATFGAREG (127 aa)). Residues 212–265 (GAREGGAKGQGRGCARPGREEAERAAAAADGAEEEDEAPREKKKPNPLDELPPS) form a disordered region. Gly residues predominate over residues 214 to 223 (REGGAKGQGR). Residues 255-411 (KPNPLDELPP…RPVLEGRVFK (157 aa)) enclose the EF-1-gamma C-terminal domain.

As to quaternary structure, EF-1 is composed of four subunits: alpha, beta, delta, and gamma.

Functionally, probably plays a role in anchoring the complex to other cellular components. The protein is Elongation factor 1-gamma of Trypanosoma cruzi.